The chain runs to 1256 residues: Pullulanase A (1256 aa).

A signal peptide spans 1 to 44 (MRKTPSHTEKKMVYSIRSLKNGTGSVLIGASLVLLAMATPTISS). Positions 42–117 (ISSDESTPTT…VTTETKAEEP (76 aa)) are disordered. Residues 48–61 (TPTTNEPNNRNTTT) are compositionally biased toward low complexity. Over residues 79-90 (DISSPRNANASL) the composition is skewed to polar residues. A compositionally biased stretch (low complexity) spans 99–111 (TEPTTSTSPVTTE). Substrate is bound by residues 141–143 (WTW), Trp-153, Asp-199, 248–250 (WYW), Trp-261, Lys-303, and Asn-308. Positions 646 and 648 each coordinate Ca(2+). Residues 652–653 (YD) and Phe-728 each bind substrate. Asp-763 functions as the Nucleophile in the catalytic mechanism. Glu-792 serves as the catalytic Proton donor. Trp-794 is a substrate binding site. The Ca(2+) site is built by Met-813, Thr-816, and Asp-817. Substrate is bound by residues Asp-824, Arg-827, and Tyr-834. Ca(2+) contacts are provided by Asp-867 and Asp-871. Substrate is bound by residues Asn-881, Lys-954, and 974-976 (DSY). Residue Asp-977 participates in Ca(2+) binding. A disordered region spans residues 1126–1224 (SQNGTSHEST…TPDRQAELPN (99 aa)). Positions 1134–1172 (STAEEKPDSTPSKPEHQDPAPEARPDSTKPDAKVADAEN) are enriched in basic and acidic residues. Over residues 1181–1194 (SQAEQPAQEAQASS) the composition is skewed to low complexity. Positions 1200–1210 (QNESVENSSKK) are enriched in polar residues. Residues 1222 to 1226 (LPNTG) carry the LPXTG sorting signal motif. Thr-1225 bears the Pentaglycyl murein peptidoglycan amidated threonine mark. Positions 1226–1256 (GIKNENKLLFAGISLLALLGLGFLLKNKKEN) are cleaved as a propeptide — removed by sortase.

The protein belongs to the glycosyl hydrolase 13 family.

It is found in the secreted. The protein localises to the cell wall. It localises to the cell surface. The enzyme catalyses Hydrolysis of (1-&gt;6)-alpha-D-glucosidic linkages in pullulan, amylopectin and glycogen, and in the alpha- and beta-limit dextrins of amylopectin and glycogen.. Its activity is regulated as follows. Inhibited by 4-O-alpha-D-glucopyranosylmoranoline (G1M). Virulence factor. Involved in the degradation of glycogen of the mammalian host cells. Hydrolyzes the alpha-1,6-branchpoints of glycogen. Hydrolyzes pullulan. Does not hydrolyze dextran. Binds to mouse lung alveolar type II cells that are rich in glycogen stores. Is an alpha-glucan-specific carbohydrate-binding protein, which binds to amylose (pure alpha-(1,4)-linked glucose), amylopectin (alpha-(1,4)-linked glucose with alpha-(1,6) branch points), pullulan (linear polymer of mixed alpha-(1,4)- and alpha-(1,6)-linked glucose) and glycogen (similar to amylopectin with more frequent alpha-(1,6) branch points) in vitro. Does not bind to dextran (a linear polymer of alpha-(1,6)-linked glucose). This is Pullulanase A from Streptococcus pneumoniae serotype 2 (strain D39 / NCTC 7466).